We begin with the raw amino-acid sequence, 497 residues long: Glycerol kinase (497 aa).

Residue Thr-13 participates in ADP binding. ATP contacts are provided by Thr-13, Thr-14, and Ser-15. Thr-13 contributes to the sn-glycerol 3-phosphate binding site. ADP is bound at residue Arg-17. Residues Arg-83, Glu-84, and Tyr-135 each coordinate sn-glycerol 3-phosphate. Glycerol-binding residues include Arg-83, Glu-84, and Tyr-135. A Phosphohistidine; by HPr modification is found at His-231. Position 245 (Asp-245) interacts with sn-glycerol 3-phosphate. 2 residues coordinate glycerol: Asp-245 and Gln-246. Residues Thr-267 and Gly-310 each coordinate ADP. ATP is bound by residues Thr-267, Gly-310, Gln-314, and Gly-411. Gly-411 and Asn-415 together coordinate ADP.

This sequence belongs to the FGGY kinase family. Homotetramer and homodimer (in equilibrium). Post-translationally, the phosphoenolpyruvate-dependent sugar phosphotransferase system (PTS), including enzyme I, and histidine-containing protein (HPr) are required for the phosphorylation, which leads to the activation of the enzyme.

It catalyses the reaction glycerol + ATP = sn-glycerol 3-phosphate + ADP + H(+). Its pathway is polyol metabolism; glycerol degradation via glycerol kinase pathway; sn-glycerol 3-phosphate from glycerol: step 1/1. With respect to regulation, activated by phosphorylation and inhibited by fructose 1,6-bisphosphate (FBP). In terms of biological role, key enzyme in the regulation of glycerol uptake and metabolism. Catalyzes the phosphorylation of glycerol to yield sn-glycerol 3-phosphate. This Listeria monocytogenes serovar 1/2a (strain ATCC BAA-679 / EGD-e) protein is Glycerol kinase.